We begin with the raw amino-acid sequence, 1401 residues long: Condensin complex subunit 1 (1401 aa).

An interactions with SMC2 and SMC4 region spans residues 1–603 (MAPQMYEFHL…TVCKNKPNMS (603 aa)). S20 and S585 each carry phosphoserine. Residues 576–596 (STQEKNPRESTGNMVTGQTVC) are compositionally biased toward polar residues. Disordered stretches follow at residues 576–611 (STQE…SRGN), 956–978 (REEQ…TTME), and 1303–1401 (LEIG…RHRS). The segment covering 956–971 (REEQEHKTKDPKEKNT) has biased composition (basic and acidic residues). Positions 1308–1336 (AGSQRAPSAKKPSTGSRYQPLASTASDND) are enriched in polar residues. 3 positions are modified to phosphoserine: S1310, S1315, and S1330. Residue T1331 is modified to Phosphothreonine. S1333 is modified (phosphoserine). T1339 is modified (phosphothreonine). The short motif at 1342–1362 (PRRTTRRHPNTQQRASKKKPK) is the Bipartite nuclear localization signal element. Residues 1345-1362 (TTRRHPNTQQRASKKKPK) show a composition bias toward basic residues. 5 positions are modified to phosphoserine: S1366, S1367, S1370, S1371, and S1376. Residues 1369 to 1382 (ESSEEDLSAEMTED) show a composition bias toward acidic residues. 2 positions are modified to phosphothreonine; by CDK1: T1384 and T1389. S1395 is subject to Phosphoserine.

This sequence belongs to the CND1 (condensin subunit 1) family. In terms of assembly, component of the condensin complex, which contains the SMC2 and SMC4 heterodimer, and three non SMC subunits that probably regulate the complex: NCAPH/BRRN1, NCAPD2/CAPD2 and NCAPG. Interacts with histones H1 and H3. Phosphorylated by CDK1. Its phosphorylation, as well as that of NCAPH and NCAPG subunits, activates the condensin complex and is required for chromosome condensation.

It is found in the nucleus. Its subcellular location is the cytoplasm. The protein localises to the chromosome. Regulatory subunit of the condensin complex, a complex required for conversion of interphase chromatin into mitotic-like condense chromosomes. The condensin complex probably introduces positive supercoils into relaxed DNA in the presence of type I topoisomerases and converts nicked DNA into positive knotted forms in the presence of type II topoisomerases. May target the condensin complex to DNA via its C-terminal domain. May promote the resolution of double-strand DNA catenanes (intertwines) between sister chromatids. Condensin-mediated compaction likely increases tension in catenated sister chromatids, providing directionality for type II topoisomerase-mediated strand exchanges toward chromatid decatenation. Required for decatenation of non-centromeric ultrafine DNA bridges during anaphase. Early in neurogenesis, may play an essential role to ensure accurate mitotic chromosome condensation in neuron stem cells, ultimately affecting neuron pool and cortex size. The polypeptide is Condensin complex subunit 1 (Homo sapiens (Human)).